The chain runs to 211 residues: Probable nicotinate-nucleotide adenylyltransferase (211 aa).

This sequence belongs to the NadD family.

The enzyme catalyses nicotinate beta-D-ribonucleotide + ATP + H(+) = deamido-NAD(+) + diphosphate. It functions in the pathway cofactor biosynthesis; NAD(+) biosynthesis; deamido-NAD(+) from nicotinate D-ribonucleotide: step 1/1. Catalyzes the reversible adenylation of nicotinate mononucleotide (NaMN) to nicotinic acid adenine dinucleotide (NaAD). The sequence is that of Probable nicotinate-nucleotide adenylyltransferase from Desulfotalea psychrophila (strain LSv54 / DSM 12343).